Consider the following 509-residue polypeptide: Cardiolipin synthase 1 (509 aa).

A run of 3 helical transmembrane segments spans residues 4–24, 30–50, and 59–79; these read PIIQ…LLNT, YTFV…VIFI, and LAWF…YSIF. PLD phosphodiesterase domains lie at 238–265 and 422–449; these read VNYR…GDEY and KDGF…DVRS. Residues His-243, Lys-245, Asp-250, His-427, Lys-429, and Asp-434 contribute to the active site.

This sequence belongs to the phospholipase D family. Cardiolipin synthase subfamily.

The protein resides in the cell membrane. The enzyme catalyses 2 a 1,2-diacyl-sn-glycero-3-phospho-(1'-sn-glycerol) = a cardiolipin + glycerol. Catalyzes the reversible phosphatidyl group transfer from one phosphatidylglycerol molecule to another to form cardiolipin (CL) (diphosphatidylglycerol) and glycerol. The sequence is that of Cardiolipin synthase 1 (cls1) from Bacillus anthracis.